We begin with the raw amino-acid sequence, 287 residues long: Cyclopropane mycolic acid synthase 3 (287 aa).

S-adenosyl-L-methionine contacts are provided by residues 33 to 34 (YS), 68 to 76 (LLDIGCGWG), 94 to 99 (TLSENQ), and 123 to 124 (WE). Cysteine 269 is an active-site residue.

This sequence belongs to the CFA/CMAS family. In terms of assembly, homodimer.

The protein localises to the cytoplasm. The catalysed reaction is a 1-acyl-2-(9Z)-enoyl-sn-glycero-3-phospholipid + S-adenosyl-L-methionine = a 1-acyl-2-(9-cyclopronane)-acyl-sn-glycero-3-phospholipid + S-adenosyl-L-homocysteine + H(+). It participates in lipid metabolism; mycolic acid biosynthesis. In terms of biological role, involved in the phagosome maturation block (PMB). Catalyzes the conversion of a double bond to a cyclopropane ring at the proximal position of an alpha mycolic acid via the transfer of a methylene group from S-adenosyl-L-methionine. It can use cis, cis 11,14-eicosadienoic acid and linoelaidic acid as substrate. Cyclopropanated mycolic acids are key factors participating in cell envelope permeability, host immunomodulation and persistence. In Mycobacterium tuberculosis (strain CDC 1551 / Oshkosh), this protein is Cyclopropane mycolic acid synthase 3 (pcaA).